The primary structure comprises 88 residues: Protein ORGAN SIZE RELATED 1 (88 aa).

Residues 25 to 76 (ITARSVALLLFLSLLLLILPPFLPPLPPPPATLLLLPLLLMILLIFLAFSPS) form an organ Size Related (OSR) domain region. 2 helical membrane-spanning segments follow: residues 30 to 50 (VALLLFLSLLLLILPPFLPPL) and 53 to 73 (PPATLLLLPLLLMILLIFLAF).

It belongs to the plant organ size related (OSR) protein family. Mostly expressed in flowers, and, to a lower extent, in leaves and cotyledons.

The protein localises to the membrane. The protein resides in the endoplasmic reticulum. It localises to the nucleus. It is found in the cytoplasm. Together with ARGOS and ARL, regulates organ growth and final organ size. Promotes both cell expansion and proliferation-dependent organ growth, in an ANT-dependent manner. The chain is Protein ORGAN SIZE RELATED 1 from Arabidopsis thaliana (Mouse-ear cress).